Consider the following 551-residue polypeptide: CTP synthase (551 aa).

Residues 1 to 267 form an amidoligase domain region; the sequence is MSGTKYIFVT…DALVLEKLGL (267 aa). S15 lines the CTP pocket. S15 contacts UTP. Residue 16–21 participates in ATP binding; the sequence is SIGKGT. Residue Y56 participates in L-glutamine binding. D73 lines the ATP pocket. Residues D73 and E141 each contribute to the Mg(2+) site. Residues 148–150, 188–193, and K224 contribute to the CTP site; these read DIE and KTKPTQ. Residues 188–193 and K224 contribute to the UTP site; that span reads KTKPTQ. Residues 292 to 534 form the Glutamine amidotransferase type-1 domain; the sequence is RVAVIGKYIR…VGACLGAAEE (243 aa). G355 provides a ligand contact to L-glutamine. The active-site Nucleophile; for glutamine hydrolysis is the C382. Residues 383–386, E406, and R462 each bind L-glutamine; that span reads LGMQ. Residues H507 and E509 contribute to the active site.

Belongs to the CTP synthase family. In terms of assembly, homotetramer.

It carries out the reaction UTP + L-glutamine + ATP + H2O = CTP + L-glutamate + ADP + phosphate + 2 H(+). It catalyses the reaction L-glutamine + H2O = L-glutamate + NH4(+). The enzyme catalyses UTP + NH4(+) + ATP = CTP + ADP + phosphate + 2 H(+). The protein operates within pyrimidine metabolism; CTP biosynthesis via de novo pathway; CTP from UDP: step 2/2. With respect to regulation, allosterically activated by GTP, when glutamine is the substrate; GTP has no effect on the reaction when ammonia is the substrate. The allosteric effector GTP functions by stabilizing the protein conformation that binds the tetrahedral intermediate(s) formed during glutamine hydrolysis. Inhibited by the product CTP, via allosteric rather than competitive inhibition. Functionally, catalyzes the ATP-dependent amination of UTP to CTP with either L-glutamine or ammonia as the source of nitrogen. Regulates intracellular CTP levels through interactions with the four ribonucleotide triphosphates. The polypeptide is CTP synthase (Rubrobacter xylanophilus (strain DSM 9941 / JCM 11954 / NBRC 16129 / PRD-1)).